Consider the following 190-residue polypeptide: Heme-binding protein 1 (190 aa).

It belongs to the HEBP family. As to quaternary structure, monomer.

Its subcellular location is the cytoplasm. In terms of biological role, may bind free porphyrinogens that may be present in the cell and thus facilitate removal of these potentially toxic compound. Binds with a high affinity to one molecule of heme or porphyrins. It binds metalloporphyrins, free porphyrins and N-methylprotoporphyrin with similar affinities. The chain is Heme-binding protein 1 (hebp1) from Xenopus tropicalis (Western clawed frog).